The sequence spans 875 residues: F-box only protein 41 (875 aa).

3 disordered regions span residues 85–110 (ESTSFQGKEQAAGPSPAAPHLLHHHH), 165–194 (SSACSTPPPGPGPGPCPGPASASPASPSPA), and 347–542 (SSSC…PSRS). Over residues 170–182 (TPPPGPGPGPCPG) the composition is skewed to pro residues. Positions 183–194 (PASASPASPSPA) are enriched in low complexity. The stretch at 209 to 351 (ALEKLEVDRR…QLQVISSSCG (143 aa)) forms a coiled coil. Residues 347–356 (SSSCGSTPSA) show a composition bias toward polar residues. The segment covering 359–368 (GRGGGGGGAG) has biased composition (gly residues). Arg360 is modified (omega-N-methylarginine). Residues 395–416 (HGSSPSTGASSRVPAASQSSGC) show a composition bias toward polar residues. Ser478 is modified (phosphoserine). Thr479 bears the Phosphothreonine mark. An F-box domain is found at 496-540 (SEAEGPLDAPRPGPAMAGPLSSCRLSARPEGGSGRGRRAERVSPS). Ser762 carries the phosphoserine modification.

Directly interacts with SKP1 and CUL1.

In terms of biological role, substrate-recognition component of the SCF (SKP1-CUL1-F-box protein)-type E3 ubiquitin ligase complex. The protein is F-box only protein 41 (FBXO41) of Homo sapiens (Human).